The following is a 964-amino-acid chain: Pumilio homolog 3 (964 aa).

A disordered region spans residues 1–22 (MMIPELGRRPMHRGNEDSSFGD). The residue at position 192 (Ser192) is a Phosphoserine. Disordered stretches follow at residues 204–235 (PVVQQPSRPASRNTFDENVDSNNNLSPSASQG), 256–300 (GTPD…TSGL), and 343–388 (DGHN…VANP). Composition is skewed to polar residues over residues 207 to 216 (QQPSRPASRN) and 223 to 234 (DSNNNLSPSASQ). The residue at position 257 (Thr257) is a Phosphothreonine. Composition is skewed to polar residues over residues 287–300 (TSNQSPFNGVTSGL) and 356–384 (RSDQARGTASCRNSQMRGSQGSAYNSGSG). Positions 606–946 (FGSSMLEEFK…HIVARVEKLV (341 aa)) constitute a PUM-HD domain. Pumilio repeat units lie at residues 626–661 (EIAGHVVEFSSDQYGSRFIQQKLETATTDEKNMVYE), 662–697 (EIMPKALALMTDVFGNYVIQKFFEHGLPPQRRELGE), 698–733 (KLIDNVLPLSLQMYGCRVIQKAIEVVDLDQKIQMVK), 734–769 (ELDGHVMRCVRDQNGNHVVQKCIECVPEENIEFIIS), 770–806 (TFFGHVVTLSTHPYGCRVIQRVLEHCHNPDTQSKVME), 807–842 (EILSTVSMLTQDQYGNYVVQHVLEHGKPDERTVIIK), 843–878 (ELAGKIVQMSQQKFASNVVEKCLTFGGPEERELLVN), and 879–920 (EMLG…LILT).

The protein localises to the cytoplasm. Sequence-specific RNA-binding protein that regulates translation and mRNA stability by binding the 3'-UTR of target mRNAs. Binds the APUM-binding elements (APBEs) in the 3'-UTR mRNA sequence of CLV1, PNH, WUS and FAS2. In Arabidopsis thaliana (Mouse-ear cress), this protein is Pumilio homolog 3 (APUM3).